The following is a 518-amino-acid chain: Cytochrome P450 704C1 (518 aa).

A run of 2 helical transmembrane segments spans residues 5 to 25 and 299 to 319; these read ILTM…WIAS and VILN…SWFI. Position 461 (C461) interacts with heme.

This sequence belongs to the cytochrome P450 family. It depends on heme as a cofactor.

Its subcellular location is the membrane. In Pinus taeda (Loblolly pine), this protein is Cytochrome P450 704C1 (CYP704C1).